Reading from the N-terminus, the 469-residue chain is MAKTLYEKLFDSHIVYEAEGETPILYINRHLIHEVTSPQAFDGLRVANRQVRQVNKTFGTMDHSISTQVRDVNKLEGQAKIQVLELDKNTKATGIKLFDITTKEQGIVHVMGPEQGLTLPGMTIVCGDSHTATHGAFGALAFGIGTSEVEHVLATQTLKQARAKSMKIEVRGKVASGITAKDIILAIIGKTTMAGGTGHVVEFCGEAIRDLSMEGRMTVCNMAIEMGAKAGLIAPDETTFAYLKDRPHAPKGKDWDDAVAYWKTLKSDDDAQFDTVVTLEAKDIAPQVTWGTNPGQVISVNETIPNPQEMADPVQRASAEKALHYIGLEAGTNLKDIKVDQVFIGSCTNSRIEDLRAAAAVMKGRKKADNVKRILVVPGSGLVKEQAEKEGLDKIFIAAGAEWRNPGCSMCLGMNDDRLGEWERCASTSNRNFEGRQGRNGRTHLVSPAMAAAAGMFGKFVDIREVALN.

[4Fe-4S] cluster-binding residues include Cys-347, Cys-408, and Cys-411.

It belongs to the aconitase/IPM isomerase family. LeuC type 1 subfamily. As to quaternary structure, heterodimer of LeuC and LeuD. The cofactor is [4Fe-4S] cluster.

It carries out the reaction (2R,3S)-3-isopropylmalate = (2S)-2-isopropylmalate. It functions in the pathway amino-acid biosynthesis; L-leucine biosynthesis; L-leucine from 3-methyl-2-oxobutanoate: step 2/4. Functionally, catalyzes the isomerization between 2-isopropylmalate and 3-isopropylmalate, via the formation of 2-isopropylmaleate. The polypeptide is 3-isopropylmalate dehydratase large subunit (Haemophilus influenzae (strain 86-028NP)).